A 1068-amino-acid polypeptide reads, in one-letter code: MNSIKNVPARVLSRRPGHSLEAEREQFDKTQAISISKAINTQEAPVKEKHARRIILGTHHEKGAFTFWSYAIGLPLPSSSILSWKFCHVLHKVLRDGHPNVLHDCQRYRSNIREIGDLWGHLHDRYGQLVNVYTKLLLTKISFHLKHPQFPAGLEVTDEVLEKAAGTDVNNIFQLTVEMFDYMDCELKLSESVFRQLNTAIAVSQMSSGQCRLAPLIQVIQDCSHLYHYTVKLLFKLHSCLPADTLQGHRDRFHEQFHSLRNFFRRASDMLYFKRLIQIPRLPEGPPNFLRASALAEHIKPVVVIPEEAPEDEEPENLIEISTGPPAGEPVVVADLFDQTFGPPNGSVKDDRDLQIESLKREVEMLRSELEKIKLEAQRYIAQLKSQVNALEGELEEQRKQKQKALVDNEQLRHELAQLRAAQLEGERSQGLREEAERKASATEARYNKLKEKHSELVHVHAELLRKNADTAKQLTVTQQSQEEVARVKEQLAFQVEQVKRESELKLEEKSDQLEKLKRELEAKAGELARAQEALSHTEQSKSELSSRLDTLSAEKDALSGAVRQREADLLAAQSLVRETEAALSREQQRSSQEQGELQGRLAERESQEQGLRQRLLDEQFAVLRGAAAEAAGILQDAVSKLDDPLHLRCTSSPDYLVSRAQEALDAVSTLEEGHAQYLTSLADASALVAALTRFSHLAADTIINGGATSHLAPTDPADRLIDTCRECGARALELMGQLQDQQALRHMQASLVRTPLQGILQLGQELKPKSLDVRQEELGAVVDKEMAATSAAIEDAVRRIEDMMNQARHASSGVKLEVNERILNSCTDLMKAIRLLVTTSTSLQKEIVESGRGAATQQEFYAKNSRWTEGLISASKAVGWGATQLVEAADKVVLHTGKYEELIVCSHEIAASTAQLVAASKVKANKHSPHLSRLQECSRTVNERAANVVASTKSGQEQIEDRDTMDFSGLSLIKLKKQEMETQVRVLELEKTLEAERMRLGELRKQHYVLAGASGSPGEEVAIRPSTAPRSVTTKKPPLAQKPSVAPRQDHQLDKKDGIYPAQLVNY.

M1 is subject to N-acetylmethionine. An ENTH domain is found at 23 to 151 (EREQFDKTQA…SFHLKHPQFP (129 aa)). Residues 347-599 (SVKDDRDLQI…RSSQEQGELQ (253 aa)) are a coiled coil. Disordered stretches follow at residues 424-443 (LEGE…ASAT), 529-549 (ARAQ…SSRL), and 582-608 (AALS…RESQ). Composition is skewed to basic and acidic residues over residues 425 to 443 (EGER…ASAT) and 539 to 549 (EQSKSELSSRL). Positions 590–600 (RSSQEQGELQG) are enriched in low complexity. In terms of domain architecture, I/LWEQ spans 771 to 1012 (SLDVRQEELG…ELRKQHYVLA (242 aa)). Positions 867–924 (RWTEGLISASKAVGWGATQLVEAADKVVLHTGKYEELIVCSHEIAASTAQLVAASKVK) are important for actin binding. A disordered region spans residues 1016–1060 (GSPGEEVAIRPSTAPRSVTTKKPPLAQKPSVAPRQDHQLDKKDGI). A Phosphoserine modification is found at S1017. Basic and acidic residues predominate over residues 1049-1059 (RQDHQLDKKDG).

It belongs to the SLA2 family. Homodimer. Interacts with actin; homodimerization promotes actin binding. Interacts with CLTB. Interacts with HIP1. Interacts (via ENTH and I/LWEQ domains) with BCL2L10. In terms of tissue distribution, brain, heart, kidney, pancreas, and liver, but not in lung or placenta.

Its subcellular location is the cytoplasm. The protein localises to the perinuclear region. It is found in the endomembrane system. The protein resides in the cytoplasmic vesicle. It localises to the clathrin-coated vesicle membrane. In terms of biological role, component of clathrin-coated pits and vesicles, that may link the endocytic machinery to the actin cytoskeleton. Binds 3-phosphoinositides (via ENTH domain). May act through the ENTH domain to promote cell survival by stabilizing receptor tyrosine kinases following ligand-induced endocytosis. The sequence is that of Huntingtin-interacting protein 1-related protein (HIP1R) from Homo sapiens (Human).